The following is a 233-amino-acid chain: MSLLYEGKAKRIFSTGTSDVLRVEYKDEVTAGNGAKKDFIEGKGRLNNQITSRIFNYLKAKGLNSHFIEQISETEQLVNSVEIIPLEVVVRNIAAGSITKRLGFEKGHTFETPLVEFFYKNDDLNDPLITEDHIKLLQIANDGEIEKLKEAATEINEVLVNLMDKMNLRLVDFKIEFGRTNEGEILLADEISPDTCRIWDKQSDTNFDKDVYREDTGSIIETYQTFLNKLEAL.

This sequence belongs to the SAICAR synthetase family.

It catalyses the reaction 5-amino-1-(5-phospho-D-ribosyl)imidazole-4-carboxylate + L-aspartate + ATP = (2S)-2-[5-amino-1-(5-phospho-beta-D-ribosyl)imidazole-4-carboxamido]succinate + ADP + phosphate + 2 H(+). It functions in the pathway purine metabolism; IMP biosynthesis via de novo pathway; 5-amino-1-(5-phospho-D-ribosyl)imidazole-4-carboxamide from 5-amino-1-(5-phospho-D-ribosyl)imidazole-4-carboxylate: step 1/2. The chain is Phosphoribosylaminoimidazole-succinocarboxamide synthase from Staphylococcus saprophyticus subsp. saprophyticus (strain ATCC 15305 / DSM 20229 / NCIMB 8711 / NCTC 7292 / S-41).